Reading from the N-terminus, the 1372-residue chain is DNA-directed RNA polymerase subunit beta (1372 aa).

It belongs to the RNA polymerase beta chain family. As to quaternary structure, the RNAP catalytic core consists of 2 alpha, 1 beta, 1 beta' and 1 omega subunit. When a sigma factor is associated with the core the holoenzyme is formed, which can initiate transcription.

It catalyses the reaction RNA(n) + a ribonucleoside 5'-triphosphate = RNA(n+1) + diphosphate. Functionally, DNA-dependent RNA polymerase catalyzes the transcription of DNA into RNA using the four ribonucleoside triphosphates as substrates. The sequence is that of DNA-directed RNA polymerase subunit beta from Rickettsia bellii (strain OSU 85-389).